Consider the following 432-residue polypeptide: 5'-deoxyadenosine deaminase (432 aa).

Residues histidine 63 and histidine 65 each coordinate Zn(2+). Substrate contacts are provided by glutamate 92 and histidine 184. Histidine 211 is a binding site for Zn(2+). Substrate-binding residues include glutamate 214 and aspartate 299. Aspartate 299 is a binding site for Zn(2+).

It belongs to the metallo-dependent hydrolases superfamily. MTA/SAH deaminase family. Homotetramer. Zn(2+) serves as cofactor.

It catalyses the reaction 5'-deoxyadenosine + H2O + H(+) = 5'-deoxyinosine + NH4(+). The enzyme catalyses S-adenosyl-L-homocysteine + H2O + H(+) = S-inosyl-L-homocysteine + NH4(+). The catalysed reaction is S-methyl-5'-thioadenosine + H2O + H(+) = S-methyl-5'-thioinosine + NH4(+). It carries out the reaction adenosine + H2O + H(+) = inosine + NH4(+). The protein operates within amino-acid biosynthesis; S-adenosyl-L-methionine biosynthesis. Functionally, catalyzes the deamination of three SAM-derived enzymatic products, namely 5'-deoxyadenosine, S-adenosyl-L-homocysteine, and 5'-methylthioadenosine, to produce the inosine analogs. Can also deaminate adenosine. The preferred substrate for this enzyme is 5'-deoxyadenosine, but all these substrates are efficiently deaminated. Likely functions in a S-adenosyl-L-methionine (SAM) recycling pathway from S-adenosyl-L-homocysteine (SAH) produced from SAM-dependent methylation reactions. May also be involved in the recycling of 5'-deoxyadenosine, whereupon the 5'-deoxyribose moiety of 5'-deoxyinosine is further metabolized to deoxyhexoses used for the biosynthesis of aromatic amino acids in methanogens. In Methanosarcina barkeri (strain Fusaro / DSM 804), this protein is 5'-deoxyadenosine deaminase.